We begin with the raw amino-acid sequence, 407 residues long: Peptidase T (407 aa).

Residue histidine 82 coordinates Zn(2+). Aspartate 84 is an active-site residue. Aspartate 143 contributes to the Zn(2+) binding site. The active-site Proton acceptor is glutamate 177. Residues glutamate 178, aspartate 200, and histidine 382 each coordinate Zn(2+).

The protein belongs to the peptidase M20B family. Zn(2+) is required as a cofactor.

The protein resides in the cytoplasm. It catalyses the reaction Release of the N-terminal residue from a tripeptide.. Its function is as follows. Cleaves the N-terminal amino acid of tripeptides. This chain is Peptidase T, found in Streptococcus equi subsp. equi (strain 4047).